The primary structure comprises 653 residues: Macrolide export ATP-binding/permease protein MacB (653 aa).

In terms of domain architecture, ABC transporter spans 6–244; the sequence is LQLTRVTRRF…DAASGASGDA (239 aa). 42–49 serves as a coordination point for ATP; it reads GASGSGKS. Helical transmembrane passes span 278-298, 526-546, 587-607, and 616-636; these read LLTM…VAIG, LTLL…IGVM, MGGA…SLFV, and AGSI…FGFM.

The protein belongs to the ABC transporter superfamily. Macrolide exporter (TC 3.A.1.122) family. In terms of assembly, homodimer.

The protein resides in the cell inner membrane. Functionally, non-canonical ABC transporter that contains transmembrane domains (TMD), which form a pore in the inner membrane, and an ATP-binding domain (NBD), which is responsible for energy generation. Confers resistance against macrolides. The protein is Macrolide export ATP-binding/permease protein MacB of Burkholderia thailandensis (strain ATCC 700388 / DSM 13276 / CCUG 48851 / CIP 106301 / E264).